The primary structure comprises 612 residues: Zinc metalloproteinase-disintegrin-like 2d (612 aa).

The N-terminal stretch at methionine 1 to serine 20 is a signal peptide. Residues isoleucine 21–proline 189 constitute a propeptide that is removed on maturation. Residues lysine 199–proline 395 form the Peptidase M12B domain. Residue glutamate 202 participates in Ca(2+) binding. A glycan (N-linked (GlcNAc...) asparagine) is linked at asparagine 218. Aspartate 286 lines the Ca(2+) pocket. Disulfide bonds link cysteine 310/cysteine 390, cysteine 350/cysteine 374, and cysteine 352/cysteine 357. Histidine 335 contacts Zn(2+). Glutamate 336 is an active-site residue. 2 residues coordinate Zn(2+): histidine 339 and histidine 345. The Ca(2+) site is built by cysteine 390, asparagine 393, valine 405, asparagine 408, phenylalanine 410, glutamate 412, glutamate 415, and aspartate 418. The Disintegrin domain maps to proline 403–asparagine 489. 14 disulfide bridges follow: cysteine 406–cysteine 435, cysteine 417–cysteine 430, cysteine 419–cysteine 425, cysteine 429–cysteine 452, cysteine 443–cysteine 449, cysteine 448–cysteine 474, cysteine 461–cysteine 481, cysteine 468–cysteine 500, cysteine 493–cysteine 505, cysteine 512–cysteine 562, cysteine 527–cysteine 573, cysteine 540–cysteine 550, cysteine 557–cysteine 599, and cysteine 593–cysteine 605. The D/ECD-tripeptide motif lies at glutamate 467–aspartate 469.

It belongs to the venom metalloproteinase (M12B) family. P-III subfamily. The cofactor is Zn(2+). As to expression, expressed by the venom gland.

The protein localises to the secreted. In terms of biological role, snake venom metalloproteinase that impairs hemostasis in the envenomed animal. In Crotalus adamanteus (Eastern diamondback rattlesnake), this protein is Zinc metalloproteinase-disintegrin-like 2d.